The primary structure comprises 582 residues: Aspartate--tRNA ligase (582 aa).

Glu-174 contacts L-aspartate. Residues 198–201 (QITK) form an aspartate region. Arg-220 provides a ligand contact to L-aspartate. Residues 220 to 222 (RDE) and Gln-229 contribute to the ATP site. His-443 is a binding site for L-aspartate. Glu-477 contributes to the ATP binding site. L-aspartate is bound at residue Arg-484. 529–532 (GLDR) is a binding site for ATP.

It belongs to the class-II aminoacyl-tRNA synthetase family. Type 1 subfamily. As to quaternary structure, homodimer.

Its subcellular location is the cytoplasm. It carries out the reaction tRNA(Asp) + L-aspartate + ATP = L-aspartyl-tRNA(Asp) + AMP + diphosphate. Functionally, catalyzes the attachment of L-aspartate to tRNA(Asp) in a two-step reaction: L-aspartate is first activated by ATP to form Asp-AMP and then transferred to the acceptor end of tRNA(Asp). The polypeptide is Aspartate--tRNA ligase (Streptococcus pyogenes serotype M28 (strain MGAS6180)).